The chain runs to 1104 residues: Transient receptor potential cation channel subfamily M member 8 (1104 aa).

The interval 1-22 is disordered; it reads MSFEGARLSMRSRRNGTMGSTR. Residues 1–733 are Cytoplasmic-facing; sequence MSFEGARLSM…LWYYVAFFTS (733 aa). A helical membrane pass occupies residues 734 to 758; the sequence is PFVVFSWNVVFYIAFLLLFAYVLLM. Topologically, residues 759-765 are extracellular; it reads DFHSVPH. A helical transmembrane segment spans residues 766–789; that stretch reads TPELILYALVFVLFCDEVRQWYMN. The Ca(2+) site is built by glutamate 782 and glutamine 785. Topologically, residues 790 to 796 are cytoplasmic; sequence GVNYFTD. A helical membrane pass occupies residues 797–817; it reads LWNVMDTLGLFYFIAGIVFRL. Ca(2+) contacts are provided by asparagine 799 and aspartate 802. The Extracellular segment spans residues 818 to 822; sequence HSSNK. The helical transmembrane segment at 823-848 threads the bilayer; the sequence is SSLYSGRVIFCLDYIIFTLRLIHIFT. At 849-853 the chain is on the cytoplasmic side; sequence VSRNL. A helical membrane pass occupies residues 854 to 890; that stretch reads GPKIIMLQRMLIDVFFFLFLFAVWMVAFGVARQGILR. Over 891–895 the chain is Extracellular; it reads QNEQR. The pore-forming intramembrane region spans 896–912; that stretch reads WRWIFRSVIYEPYLAMF. The Extracellular segment spans residues 913–953; it reads GQVPSDVDSTTYDFSHCTFSGNESKPLCVELDEHNLPRFPE. N-linked (GlcNAc...) (complex) asparagine glycosylation occurs at asparagine 934. The helical transmembrane segment at 954 to 984 threads the bilayer; that stretch reads WITIPLVCIYMLSTNILLVNLLVAMFGYTVG. Residues 985–1104 lie on the Cytoplasmic side of the membrane; it reads IVQENNDQVW…LLKEIANNIK (120 aa). Residues 1069–1104 adopt a coiled-coil conformation; the sequence is TKANDNSEEMRHRFRQLDSKLNDLKSLLKEIANNIK.

The protein belongs to the transient receptor (TC 1.A.4) family. LTrpC subfamily. TRPM8 sub-subfamily. Homotetramer. Interacts (via N-terminus and C-terminus domains) with TCAF1; the interaction stimulates TRPM8 channel activity. Interacts (via N-terminus and C-terminus domains) with TCAF2; the interaction inhibits TRPM8 channel activity. N-glycosylation is not essential for but facilitates cell surface expression, multimerization, association with lipid rafts and ion channel activity. As to expression, expressed in dorsal root and trigeminal ganglia. Specifically expressed in a subset of pain- and temperature-sensing neurons. Not expressed in heavily myelinated neurons. Not expressed in neurons expressing TRPA1 or TRPV1.

The protein resides in the cell membrane. Its subcellular location is the membrane raft. The catalysed reaction is Ca(2+)(in) = Ca(2+)(out). It catalyses the reaction Na(+)(in) = Na(+)(out). It carries out the reaction K(+)(in) = K(+)(out). Its activity is regulated as follows. Activated by cold temperatures and by both natural and synthetic cooling compounds such as menthol and icilin. Activation of the channel requires the presence of PI(4,5)P2; PI(4,5)P2 is necessary to gate the channel. Activated by intracellular Ca(2+). In terms of biological role, non-selective ion channel permeable to monovalent and divalent cations, including Na(+), K(+), and Ca(2+), with higher permeability for Ca(2+). Activated by multiple factors, such as temperature, voltage, pressure, and changes in osmolality. Activated by cool temperatures (&lt;23-28 degrees Celsius) and by chemical ligands evoking a sensation of coolness, such as menthol and icilin, therefore plays a central role in the detection of environmental cold temperatures. TRPM8 is a voltage-dependent channel; its activation by cold or chemical ligands shifts its voltage thresholds towards physiological membrane potentials, leading to the opening of the channel. In addition to its critical role in temperature sensing, regulates basal tear secretion by sensing evaporation-induced cooling and changes in osmolality. The protein is Transient receptor potential cation channel subfamily M member 8 (Trpm8) of Mus musculus (Mouse).